We begin with the raw amino-acid sequence, 363 residues long: Alanine racemase (363 aa).

The active-site Proton acceptor; specific for D-alanine is the Lys39. Lys39 carries the post-translational modification N6-(pyridoxal phosphate)lysine. Arg134 provides a ligand contact to substrate. Tyr251 functions as the Proton acceptor; specific for L-alanine in the catalytic mechanism. Met299 contributes to the substrate binding site.

Belongs to the alanine racemase family. It depends on pyridoxal 5'-phosphate as a cofactor.

The enzyme catalyses L-alanine = D-alanine. It participates in amino-acid biosynthesis; D-alanine biosynthesis; D-alanine from L-alanine: step 1/1. Its function is as follows. Catalyzes the interconversion of L-alanine and D-alanine. May also act on other amino acids. The sequence is that of Alanine racemase (alr) from Thermodesulfovibrio yellowstonii (strain ATCC 51303 / DSM 11347 / YP87).